Reading from the N-terminus, the 273-residue chain is MDWMELLKAVILGMVEGLTEFAPVSSTGHMIIVDDLWLKSTEFLGKYAANTFKVVIQLGSILAAVVVFKDRFLELLGIRGRHPGGKPRLTLLHVIIGLLPAGVLGVLFEDYIDEHLFSTKTVLIGLVLGALLMIVADRFAKKAARAQTVDQITYKQAFLVGLVQCLSLWPGFSRSGSTIAGGVLVGMSHRAAADFTFIMAVPIMAGASGLSLLKNWQYVTVADIPFFIAGFLSAFVFALLAIRFFLHLINRIRLVPFAVYRIALAFIIYFLYF.

Helical transmembrane passes span alanine 48 to phenylalanine 68, leucine 89 to glutamate 109, leucine 116 to alanine 136, isoleucine 152 to phenylalanine 172, alanine 193 to leucine 213, alanine 222 to isoleucine 242, and isoleucine 252 to tyrosine 272.

This sequence belongs to the UppP family.

It localises to the cell membrane. The enzyme catalyses di-trans,octa-cis-undecaprenyl diphosphate + H2O = di-trans,octa-cis-undecaprenyl phosphate + phosphate + H(+). Its function is as follows. Catalyzes the dephosphorylation of undecaprenyl diphosphate (UPP). Confers resistance to bacitracin. The sequence is that of Undecaprenyl-diphosphatase from Geobacillus thermodenitrificans (strain NG80-2).